We begin with the raw amino-acid sequence, 215 residues long: MOB kinase activator-like 1B (215 aa).

A disordered region spans residues 1–25; that stretch reads MSLFGLGRNQKTFRPKKSAPSGTKG. Positions 79, 84, 161, and 166 each coordinate Zn(2+).

It belongs to the MOB1/phocein family. Interacts with SIK1. Expression is detected along the vasculature in cotyledons, hypocotyls and roots of 3- to 4-day-old seedlings.

The sequence is that of MOB kinase activator-like 1B from Arabidopsis thaliana (Mouse-ear cress).